Consider the following 222-residue polypeptide: UPF0585 protein CG18661 (222 aa).

The protein belongs to the UPF0585 family.

In Drosophila melanogaster (Fruit fly), this protein is UPF0585 protein CG18661.